Here is a 664-residue protein sequence, read N- to C-terminus: uncharacterized protein (664 aa).

A signal peptide spans 1–25 (MSWKRYLKWVSFAIIPLLFANTSIK). A helical transmembrane segment spans residues 625–645 (IIVYLIIGFSVLVLFITVFIY).

This sequence belongs to the MG414/MG415 family.

The protein resides in the cell membrane. This is an uncharacterized protein from Mycoplasma genitalium (strain ATCC 33530 / DSM 19775 / NCTC 10195 / G37) (Mycoplasmoides genitalium).